The sequence spans 380 residues: 4-hydroxy-3-methylbut-2-en-1-yl diphosphate synthase (flavodoxin) (380 aa).

Residues Cys-275, Cys-278, Cys-310, and Glu-317 each coordinate [4Fe-4S] cluster.

This sequence belongs to the IspG family. The cofactor is [4Fe-4S] cluster.

It carries out the reaction (2E)-4-hydroxy-3-methylbut-2-enyl diphosphate + oxidized [flavodoxin] + H2O + 2 H(+) = 2-C-methyl-D-erythritol 2,4-cyclic diphosphate + reduced [flavodoxin]. It participates in isoprenoid biosynthesis; isopentenyl diphosphate biosynthesis via DXP pathway; isopentenyl diphosphate from 1-deoxy-D-xylulose 5-phosphate: step 5/6. Its function is as follows. Converts 2C-methyl-D-erythritol 2,4-cyclodiphosphate (ME-2,4cPP) into 1-hydroxy-2-methyl-2-(E)-butenyl 4-diphosphate. The protein is 4-hydroxy-3-methylbut-2-en-1-yl diphosphate synthase (flavodoxin) of Hyphomonas neptunium (strain ATCC 15444).